We begin with the raw amino-acid sequence, 258 residues long: L-aminoadipate-semialdehyde dehydrogenase-phosphopantetheinyl transferase (258 aa).

Belongs to the P-Pant transferase superfamily. AcpS family.

It carries out the reaction apo-[ACP] + CoA = holo-[ACP] + adenosine 3',5'-bisphosphate + H(+). In terms of biological role, catalyzes the transfer of a 4'-phosphopantetheine moiety from coenzyme A to a serine residue of acceptor proteins, such as alpha-aminoadipate reductase. Necessary for alpha-aminoadipate reductase activity. In Candida glabrata (strain ATCC 2001 / BCRC 20586 / JCM 3761 / NBRC 0622 / NRRL Y-65 / CBS 138) (Yeast), this protein is L-aminoadipate-semialdehyde dehydrogenase-phosphopantetheinyl transferase (LYS5).